Here is a 453-residue protein sequence, read N- to C-terminus: Probable exopolygalacturonase B (453 aa).

Positions M1–S16 are cleaved as a signal peptide. N-linked (GlcNAc...) asparagine glycosylation is found at N185 and N225. The active-site Proton donor is D255. A disulfide bond links C257 and C274. N-linked (GlcNAc...) asparagine glycans are attached at residues N263 and N275. H278 is an active-site residue. PbH1 repeat units lie at residues I295 to A316 and I327 to Q348. N-linked (GlcNAc...) asparagine glycans are attached at residues N302, N329, N354, and N366. Residues P362 to N405 form a PbH1 3 repeat. A disulfide bridge links C392 with C398. N-linked (GlcNAc...) asparagine glycosylation occurs at N436.

The protein belongs to the glycosyl hydrolase 28 family.

It localises to the secreted. It carries out the reaction [(1-&gt;4)-alpha-D-galacturonosyl](n) + H2O = alpha-D-galacturonate + [(1-&gt;4)-alpha-D-galacturonosyl](n-1). Its function is as follows. Specific in hydrolyzing the terminal glycosidic bond of polygalacturonic acid and oligogalacturonates. This chain is Probable exopolygalacturonase B (pgxB), found in Aspergillus fumigatus (strain CBS 144.89 / FGSC A1163 / CEA10) (Neosartorya fumigata).